We begin with the raw amino-acid sequence, 685 residues long: ABC transporter G family member 26 (685 aa).

The 265-residue stretch at 65-329 (LKFEDVEYKV…FSSLRILPEI (265 aa)) folds into the ABC transporter domain. 124–131 (GPSGSGKT) contacts ATP. Residues 414–623 (DQFLILSRRT…GFRLLLKVQY (210 aa)) enclose the ABC transmembrane type-2 domain. 6 consecutive transmembrane segments (helical) span residues 432-452 (FDKL…LLWW), 468-488 (LMFY…VYVF), 518-538 (MVAH…MAEF), 542-562 (IPCF…SQGA), 576-596 (AGMI…YYVQ), and 648-668 (TINL…AFGY).

It belongs to the ABC transporter superfamily. ABCG family. Eye pigment precursor importer (TC 3.A.1.204) subfamily. As to quaternary structure, homo- or heterodimer. Mostly expressed in flowers, especially in tapetum within anthers.

The protein resides in the cell membrane. It is found in the endoplasmic reticulum membrane. In terms of biological role, mediates the transport of sporopollenin precursors (e.g. polyketides) across the tapetum plasma membrane into the anther locule for polymerization on developing microspore walls, thus being required for male fertility and pollen exine formation and patterning prior to tapetum programmed cell death. The chain is ABC transporter G family member 26 from Arabidopsis thaliana (Mouse-ear cress).